A 337-amino-acid chain; its full sequence is DNA-directed RNA polymerase subunit alpha (337 aa).

The alpha N-terminal domain (alpha-NTD) stretch occupies residues 1–233 (MVREEVAVST…DLFIPFLHAE (233 aa)). An alpha C-terminal domain (alpha-CTD) region spans residues 266-337 (GIALKCIFID…FTIDLPKNKF (72 aa)).

Belongs to the RNA polymerase alpha chain family. As to quaternary structure, in plastids the minimal PEP RNA polymerase catalytic core is composed of four subunits: alpha, beta, beta', and beta''. When a (nuclear-encoded) sigma factor is associated with the core the holoenzyme is formed, which can initiate transcription.

The protein resides in the plastid. It is found in the chloroplast. The catalysed reaction is RNA(n) + a ribonucleoside 5'-triphosphate = RNA(n+1) + diphosphate. Its function is as follows. DNA-dependent RNA polymerase catalyzes the transcription of DNA into RNA using the four ribonucleoside triphosphates as substrates. This Liriodendron tulipifera (Tuliptree) protein is DNA-directed RNA polymerase subunit alpha.